The sequence spans 212 residues: Probable 2-dehydro-3-deoxy-6-phosphogalactonate aldolase (212 aa).

Arginine 18 serves as a coordination point for 2-dehydro-3-deoxy-6-phospho-D-galactonate. Catalysis depends on glutamate 41, which acts as the Proton donor/acceptor. 2-dehydro-3-deoxy-6-phospho-D-galactonate-binding residues include threonine 70, lysine 130, glycine 160, glycine 180, and serine 181. Lysine 130 serves as the catalytic Schiff-base intermediate with substrate.

This sequence belongs to the KHG/KDPG aldolase family. As to quaternary structure, homotrimer.

It catalyses the reaction 2-dehydro-3-deoxy-6-phospho-D-galactonate = D-glyceraldehyde 3-phosphate + pyruvate. It functions in the pathway carbohydrate acid metabolism; D-galactonate degradation; D-glyceraldehyde 3-phosphate and pyruvate from D-galactonate: step 3/3. Its function is as follows. Involved in the degradation of galactose via the DeLey-Doudoroff pathway. Catalyzes the reversible, stereospecific retro-aldol cleavage of 2-keto-3-deoxy-6-phosphogalactonate (KDPGal) to pyruvate and D-glyceraldehyde-3-phosphate. This is Probable 2-dehydro-3-deoxy-6-phosphogalactonate aldolase (dgoA) from Rhizobium meliloti (strain 1021) (Ensifer meliloti).